The sequence spans 1464 residues: Glutamate receptor ionotropic, NMDA 2A (1464 aa).

The N-terminal stretch at 1-22 is a signal peptide; the sequence is MGRVGYWTLLVLPALLVWRGPA. At 23–556 the chain is on the extracellular side; sequence PSAAAEKGPP…SAFLEPFSAS (534 aa). A Zn(2+)-binding site is contributed by His-44. Asn-75 carries N-linked (GlcNAc...) asparagine glycosylation. Cys-87 and Cys-320 form a disulfide bridge. Zn(2+)-binding residues include His-128, Glu-266, and Asp-282. Asn-340, Asn-380, Asn-443, and Asn-444 each carry an N-linked (GlcNAc...) asparagine glycan. Cystine bridges form between Cys-429-Cys-455 and Cys-436-Cys-456. Residues Ser-511, Thr-513, and Arg-518 each coordinate L-glutamate. Residue Asn-541 is glycosylated (N-linked (GlcNAc...) asparagine). A helical transmembrane segment spans residues 557-576; that stretch reads VWVMMFVMLLIVSAIAVFVF. The Cytoplasmic portion of the chain corresponds to 577–600; the sequence is EYFSPVGYNRNLAKGKAPHGPSFT. Residues 599–620 are pore-forming; the sequence is FTIGKAIWLLWGLVFNNSVPVQ. Positions 601–615 form an intramembrane region, discontinuously helical; the sequence is IGKAIWLLWGLVFNN. Residues 616-625 lie on the Cytoplasmic side of the membrane; it reads SVPVQNPKGT. Residues 626–646 traverse the membrane as a helical segment; it reads TSKIMVSVWAFFAVIFLASYT. Topologically, residues 647–814 are extracellular; sequence ANLAAFMIQE…NEVMSSQLDI (168 aa). N-linked (GlcNAc...) asparagine glycosylation occurs at Asn-687. Residues Ser-689, Thr-690, and Asp-731 each coordinate L-glutamate. Cys-745 and Cys-800 are oxidised to a cystine. A helical transmembrane segment spans residues 815–835; it reads DNMAGVFYMLAAAMALSLITF. The Cytoplasmic segment spans residues 836–1464; it reads IWEHLFYWKL…KKMPSIESDV (629 aa). Phosphoserine is present on residues Ser-882, Ser-890, and Ser-929. Polar residues-rich tracts occupy residues 997–1010 and 1023–1032; these read EVAV…NSRP and QDSLSQNPVS. The segment at 997 to 1083 is disordered; the sequence is EVAVSTESKA…PDNSKNHKTK (87 aa). The residue at position 1025 (Ser-1025) is a Phosphoserine. Composition is skewed to basic and acidic residues over residues 1033–1043 and 1052–1061; these read QRDEATAENRT and LPEEMAHSDI. A phosphoserine mark is found at Ser-1059 and Ser-1062. The span at 1070 to 1083 shows a compositional bias: basic and acidic residues; that stretch reads CHREPDNSKNHKTK. Phosphoserine occurs at positions 1198 and 1291. A disordered region spans residues 1335 to 1372; that stretch reads KLSGKKSSLFPQGLEDSKRSKSLLPDHTSDNPFLHSHR. The PDZ-binding signature appears at 1462-1464; that stretch reads SDV.

It belongs to the glutamate-gated ion channel (TC 1.A.10.1) family. NR2A/GRIN2A subfamily. Heterotetramer. Forms heterotetrameric channels composed of two GluN1/zeta subunits (GRIN1), and two identical GluN2/epsilon subunits (GRIN2A, GRIN2B, GRIN2C or GRIN2D) or GluN3 subunits (GRIN3A or GRIN3B) (in vitro). Can also form heterotetrameric channels that contain at least two GluN1 subunits and at least two different GluN2 subunits (or a combination of one GluN2 and one GluN3 subunits) (in vitro). In vivo, the subunit composition may depend on the expression levels of the different subunits. Found in a complex with GRIN1, GRIN3A and PPP2CB. Found in a complex with GRIN1 and GRIN3B. Interacts with AIP1. Interacts with HIP1 and NETO1. Interacts with SNX27 (via PDZ domain); the interaction is required for recycling to the plasma membrane when endocytosed and prevent degradation in lysosomes. Interacts with PDZ domains of PATJ and DLG4. Interacts with LRFN2. Interacts with RPH3A and DLG4; this ternary complex regulates NMDA receptor composition at postsynaptic membranes. Interacts with SORCS2. Interacts with ARC; preventing ARC oligomerization. Interacts (via the extreme C-terminus) with FRMPD2 (the second PDZ domain); the interaction is direct and is likely to promote NMDAR-mediated neural signal transmission. GRIN2A binds FRMPD2 with lower affinity than GRIN2B.

The protein resides in the cell projection. The protein localises to the dendritic spine. It localises to the cell membrane. It is found in the synapse. Its subcellular location is the postsynaptic cell membrane. The protein resides in the cytoplasmic vesicle membrane. It catalyses the reaction Ca(2+)(in) = Ca(2+)(out). The enzyme catalyses Na(+)(in) = Na(+)(out). The catalysed reaction is K(+)(in) = K(+)(out). With respect to regulation, NMDA glutamate receptor activity is inhibited by endogenous Mg(2+) in a voltage-dependent manner. NMDA glutamate receptor activity is inhibited by endogenous Zn(2+). NMDA glutamate receptor activity is inhibited by endogenous protons. Its function is as follows. Component of N-methyl-D-aspartate (NMDA) receptors (NMDARs) that function as heterotetrameric, ligand-gated cation channels with high calcium permeability and voltage-dependent block by Mg(2+). NMDARs participate in synaptic plasticity for learning and memory formation by contributing to the slow phase of excitatory postsynaptic current, long-term synaptic potentiation, and learning. Channel activation requires binding of the neurotransmitter L-glutamate to the GluN2 subunit, glycine or D-serine binding to the GluN1 subunit, plus membrane depolarization to eliminate channel inhibition by Mg(2+). NMDARs mediate simultaneously the potasium efflux and the influx of calcium and sodium. Each GluN2 subunit confers differential attributes to channel properties, including activation, deactivation and desensitization kinetics, pH sensitivity, Ca2(+) permeability, and binding to allosteric modulators. Participates in the synaptic plasticity regulation through activation by the L-glutamate releaseed by BEST1, into the synaptic cleft, upon F2R/PAR-1 activation in astrocyte. This chain is Glutamate receptor ionotropic, NMDA 2A, found in Homo sapiens (Human).